Reading from the N-terminus, the 538-residue chain is Phosphoenolpyruvate carboxykinase (ATP) (538 aa).

Substrate contacts are provided by Arg-64, Tyr-205, and Lys-211. Residues Lys-211, His-230, and 246 to 254 (GLSGTGKTT) contribute to the ATP site. Mn(2+) contacts are provided by Lys-211 and His-230. Position 267 (Asp-267) interacts with Mn(2+). ATP-binding positions include Glu-295, Arg-331, 447–448 (RI), and Thr-453. Arg-331 contacts substrate.

It belongs to the phosphoenolpyruvate carboxykinase (ATP) family. In terms of assembly, monomer. The cofactor is Mn(2+).

It localises to the cytoplasm. The catalysed reaction is oxaloacetate + ATP = phosphoenolpyruvate + ADP + CO2. The protein operates within carbohydrate biosynthesis; gluconeogenesis. Its function is as follows. Involved in the gluconeogenesis. Catalyzes the conversion of oxaloacetate (OAA) to phosphoenolpyruvate (PEP) through direct phosphoryl transfer between the nucleoside triphosphate and OAA. The chain is Phosphoenolpyruvate carboxykinase (ATP) from Histophilus somni (strain 129Pt) (Haemophilus somnus).